We begin with the raw amino-acid sequence, 491 residues long: MANYFNTLNLRQQLAQLGKCRFMGRDEFADGASYLQGKKVVIVGCGAQGLNQGLNMRDSGLDISYALRKEAIAEKRASWRKATENGFKVGTYEELIPQADLVINLTPDKQHSDVVRSVQPLMKDGAALGYSHGFNIVEVGEQIRKDITVVMVAPKCPGTEVREEYKRGFGVPTLIAVHPENDPKGEGMAIAKAWAAATGGHRAGVLESSFVAEVKSDLMGEQTILCGMLQAGSLLCFDKLVEEGTDPAYAEKLIQFGWETITEALKQGGITLMMDRLSNPAKLRAYALSEQLKAIMAPLFQKHMDDIISGEFSSGMMADWANDDKKLLTWREETGKTAFETAPQYEGKIGEQEYFDKGVLMIAMVKAGVELAFETMVDSGIIEESAYYESLHELPLIANTIARKRLYEMNVVISDTAEYGNYLFSYACVPLLKPFMAELQPGDLGKAIAEGSVDNAQLRDVNDAIRSHAIEKVGQKLRGYMTDMKRIAVAG.

The 194-residue stretch at 15–208 folds into the KARI N-terminal Rossmann domain; it reads AQLGKCRFMG…GGHRAGVLES (194 aa). Residues 45–48, R68, R76, S78, and 108–110 contribute to the NADP(+) site; these read CGAQ and DKQ. The active site involves H132. NADP(+) is bound at residue G158. 2 KARI C-terminal knotted domains span residues 209–344 and 345–484; these read SFVA…TAPQ and YEGK…MTDM. Mg(2+) contacts are provided by D217, E221, E389, and E393. Position 414 (S414) interacts with substrate.

It belongs to the ketol-acid reductoisomerase family. Mg(2+) is required as a cofactor.

The catalysed reaction is (2R)-2,3-dihydroxy-3-methylbutanoate + NADP(+) = (2S)-2-acetolactate + NADPH + H(+). It catalyses the reaction (2R,3R)-2,3-dihydroxy-3-methylpentanoate + NADP(+) = (S)-2-ethyl-2-hydroxy-3-oxobutanoate + NADPH + H(+). The protein operates within amino-acid biosynthesis; L-isoleucine biosynthesis; L-isoleucine from 2-oxobutanoate: step 2/4. It functions in the pathway amino-acid biosynthesis; L-valine biosynthesis; L-valine from pyruvate: step 2/4. In terms of biological role, involved in the biosynthesis of branched-chain amino acids (BCAA). Catalyzes an alkyl-migration followed by a ketol-acid reduction of (S)-2-acetolactate (S2AL) to yield (R)-2,3-dihydroxy-isovalerate. In the isomerase reaction, S2AL is rearranged via a Mg-dependent methyl migration to produce 3-hydroxy-3-methyl-2-ketobutyrate (HMKB). In the reductase reaction, this 2-ketoacid undergoes a metal-dependent reduction by NADPH to yield (R)-2,3-dihydroxy-isovalerate. The chain is Ketol-acid reductoisomerase (NADP(+)) from Salmonella arizonae (strain ATCC BAA-731 / CDC346-86 / RSK2980).